Here is a 472-residue protein sequence, read N- to C-terminus: Lactate utilization protein B (472 aa).

4Fe-4S ferredoxin-type domains lie at 304–334 and 353–382; these read GTEF…GHSY and YDDY…LHEL. [4Fe-4S] cluster contacts are provided by Cys-313, Cys-316, Cys-319, Cys-323, Cys-366, Cys-369, and Cys-373.

This sequence belongs to the LutB/YkgF family.

Is involved in L-lactate degradation and allows cells to grow with lactate as the sole carbon source. Has probably a role as an electron transporter during oxidation of L-lactate. The polypeptide is Lactate utilization protein B (Anoxybacillus flavithermus (strain DSM 21510 / WK1)).